Consider the following 350-residue polypeptide: Protein RecA (350 aa).

67 to 74 (GPESSGKT) is an ATP binding site.

Belongs to the RecA family.

It localises to the cytoplasm. In terms of biological role, can catalyze the hydrolysis of ATP in the presence of single-stranded DNA, the ATP-dependent uptake of single-stranded DNA by duplex DNA, and the ATP-dependent hybridization of homologous single-stranded DNAs. It interacts with LexA causing its activation and leading to its autocatalytic cleavage. The sequence is that of Protein RecA from Wolinella succinogenes (strain ATCC 29543 / DSM 1740 / CCUG 13145 / JCM 31913 / LMG 7466 / NCTC 11488 / FDC 602W) (Vibrio succinogenes).